Consider the following 189-residue polypeptide: Interleukin-23 subunit alpha (189 aa).

The N-terminal stretch at 1–19 (MLGSTAVMLLLLLPWTAQT) is a signal peptide.

The protein belongs to the IL-6 superfamily. As to quaternary structure, heterodimer with IL12B; disulfide-linked. The heterodimer is known as interleukin IL-23. Interacts with IL23R; this interaction enables recruitment of IL12RB1.

It is found in the secreted. Functionally, associates with IL12B to form the pro-inflammatory cytokine IL-23 that plays different roles in innate and adaptive immunity. Released by antigen-presenting cells such as dendritic cells or macrophages, binds to a heterodimeric receptor complex composed of IL12RB1 and IL23R to activate JAK2 and TYK2 which then phosphorylate the receptor to form a docking site leading to the phosphorylation of STAT3 and STAT4. This process leads to activation of several pathways including p38 MAPK or NF-kappa-B and promotes the production of pro-inflammatory cytokines such as interleukin-17A/IL17A. In turn, participates in the early and effective intracellular bacterial clearance. Promotes the expansion and survival of T-helper 17 cells, a CD4-positive helper T-cell subset that produces IL-17, as well as other IL-17-producing cells. This chain is Interleukin-23 subunit alpha (IL23A), found in Cavia porcellus (Guinea pig).